Consider the following 501-residue polypeptide: Chromosomal replication initiator protein DnaA (501 aa).

Residues 1–90 (MSVELWQQCV…KRSSAPRAAP (90 aa)) are domain I, interacts with DnaA modulators. Residues 91 to 164 (NAPLAAAASQ…QVEGALKHTS (74 aa)) form a domain II region. The segment covering 103-121 (AAPVASTPAPAPSKSSAKK) has biased composition (low complexity). The segment at 103 to 150 (AAPVASTPAPAPSKSSAKKNAAENEEPSRDSFDPMAGASSQQAPIRAE) is disordered. The segment covering 122 to 134 (NAAENEEPSRDSF) has biased composition (basic and acidic residues). Positions 165-381 (YLNRTFTFEN…GALKRVIAHS (217 aa)) are domain III, AAA+ region. ATP contacts are provided by G209, G211, K212, and T213. The tract at residues 382 to 501 (HFMGRDITIE…YKNLLRTLTT (120 aa)) is domain IV, binds dsDNA.

It belongs to the DnaA family. As to quaternary structure, oligomerizes as a right-handed, spiral filament on DNA at oriC.

It is found in the cytoplasm. Its function is as follows. Plays an essential role in the initiation and regulation of chromosomal replication. ATP-DnaA binds to the origin of replication (oriC) to initiate formation of the DNA replication initiation complex once per cell cycle. Binds the DnaA box (a 9 base pair repeat at the origin) and separates the double-stranded (ds)DNA. Forms a right-handed helical filament on oriC DNA; dsDNA binds to the exterior of the filament while single-stranded (ss)DNA is stabiized in the filament's interior. The ATP-DnaA-oriC complex binds and stabilizes one strand of the AT-rich DNA unwinding element (DUE), permitting loading of DNA polymerase. After initiation quickly degrades to an ADP-DnaA complex that is not apt for DNA replication. Binds acidic phospholipids. The sequence is that of Chromosomal replication initiator protein DnaA from Pseudomonas fluorescens (strain SBW25).